A 143-amino-acid polypeptide reads, in one-letter code: Ribosome-binding factor A (143 aa).

Positions 119–129 are enriched in basic and acidic residues; the sequence is AVGDKPAVPRD. The tract at residues 119-143 is disordered; it reads AVGDKPAVPRDDNDDPVSDNPERDA.

It belongs to the RbfA family. In terms of assembly, monomer. Binds 30S ribosomal subunits, but not 50S ribosomal subunits or 70S ribosomes.

It is found in the cytoplasm. In terms of biological role, one of several proteins that assist in the late maturation steps of the functional core of the 30S ribosomal subunit. Associates with free 30S ribosomal subunits (but not with 30S subunits that are part of 70S ribosomes or polysomes). Required for efficient processing of 16S rRNA. May interact with the 5'-terminal helix region of 16S rRNA. The polypeptide is Ribosome-binding factor A (Marinobacter nauticus (strain ATCC 700491 / DSM 11845 / VT8) (Marinobacter aquaeolei)).